Consider the following 1462-residue polypeptide: Iron-sulfur cluster assembly protein SufD (1462 aa).

3 disordered regions span residues I500–Y525, N938–Q970, and N1111–E1153. Over residues N510–N523 the composition is skewed to low complexity. A compositionally biased stretch (basic and acidic residues) spans H961–Q970. Low complexity predominate over residues N1111–N1136.

Belongs to the iron-sulfur cluster assembly SufBD family. In terms of assembly, component of a complex composed of SufB, SufC and SufD in a stoichiometric ratio of 1:2:1. Interacts with SufB. Interacts with SufC; the interaction enhances the ATPase activity of SufC. In terms of processing, proteolytically cleaved.

Its subcellular location is the plastid. The protein localises to the apicoplast. It participates in cofactor biosynthesis; iron-sulfur cluster biosynthesis. Its function is as follows. Participates in the sulfur mobilization (SUF) pathway for iron-sulfur (Fe-S) cluster biogenesis. As part of a complex consisting of SufB-SufC(2)-SufD, involved in assembly of [4Fe-4S] clusters. Enhances the ATPase activity of SufC. This chain is Iron-sulfur cluster assembly protein SufD, found in Plasmodium falciparum (isolate 3D7).